The primary structure comprises 577 residues: Moesin (577 aa).

The FERM domain occupies 2–295 (PKTISVRVTT…GNHELYMRRR (294 aa)). Position 74 is a phosphoserine (Ser74). Lys79 carries the N6-acetyllysine modification. An N6-succinyllysine modification is found at Lys83. Residues 115 to 120 (IYCPPE) carry the [IL]-x-C-x-x-[DE] motif motif. Tyr116 carries the phosphotyrosine modification. The residue at position 117 (Cys117) is an S-nitrosocysteine. Residues Lys139 and Lys165 each carry the N6-acetyllysine modification. Disordered regions lie at residues 322–342 (LLEN…KIER), 358–453 (TKKA…QMVQ), and 468–549 (STPH…AENM). The segment covering 358 to 401 (TKKAQQELEEQTRRALELEQERKRAQSEAEKLAKERQEAEEAKE) has biased composition (basic and acidic residues). Position 407 is a phosphoserine (Ser407). Composition is skewed to basic and acidic residues over residues 438 to 447 (KESEAEECHQ) and 492 to 519 (AELR…ERVQ). A Phosphoserine modification is found at Ser527. Basic and acidic residues predominate over residues 531-549 (NARDESKKTTNDMIHAENM). Residue Thr558 is modified to Phosphothreonine; by ROCK2 and STK10.

In terms of assembly, in resting T-cells, part of a PAG1-NHERF1-MSN complex which is disrupted upon TCR activation. Interacts with NHERF1. Interacts with PPP1R16B. Interacts with PDZD8. Interacts with SELPLG and SYK; these interactions mediate the activation of SYK by SELPLG. Interacts with PDPN (via cytoplasmic domain); this interaction activates RHOA and promotes epithelial-mesenchymal transition. Interacts with SPN/CD43 cytoplasmic tail. Interacts with CD44. Interacts with ICAM2. Interacts with ICAM3 (via C-terminus). Interacts with PDZD8. Interacts with F-actin. Interacts with CD46. Interacts with PTPN6. Post-translationally, phosphorylation on Thr-558 is crucial for the formation of microvilli-like structures. Phosphorylation by ROCK2 suppresses the head-to-tail association of the N-terminal and C-terminal halves resulting in an opened conformation which is capable of actin and membrane-binding. Phosphorylation on Thr-558 by STK10 negatively regulates lymphocyte migration and polarization. S-nitrosylation of Cys-117 is induced by interferon-gamma and oxidatively-modified low-densitity lipoprotein (LDL(ox)) implicating the iNOS-S100A8/9 transnitrosylase complex.

It localises to the cell membrane. The protein resides in the cytoplasm. The protein localises to the cytoskeleton. It is found in the apical cell membrane. Its subcellular location is the cell projection. It localises to the microvillus membrane. The protein resides in the microvillus. With respect to regulation, a head-to-tail association, of the N-terminal and C-terminal halves results in a closed conformation (inactive form) which is incapable of actin or membrane-binding. In terms of biological role, ezrin-radixin-moesin (ERM) family protein that connects the actin cytoskeleton to the plasma membrane and thereby regulates the structure and function of specific domains of the cell cortex. Tethers actin filaments by oscillating between a resting and an activated state providing transient interactions between moesin and the actin cytoskeleton. Once phosphorylated on its C-terminal threonine, moesin is activated leading to interaction with F-actin and cytoskeletal rearrangement. These rearrangements regulate many cellular processes, including cell shape determination, membrane transport, and signal transduction. The role of moesin is particularly important in immunity acting on both T and B-cells homeostasis and self-tolerance, regulating lymphocyte egress from lymphoid organs. Modulates phagolysosomal biogenesis in macrophages. Participates also in immunologic synapse formation. The chain is Moesin from Rattus norvegicus (Rat).